A 255-amino-acid chain; its full sequence is Sugar fermentation stimulation protein homolog (255 aa).

Belongs to the SfsA family.

The protein is Sugar fermentation stimulation protein homolog of Synechococcus sp. (strain WH7803).